A 155-amino-acid polypeptide reads, in one-letter code: UPF0178 protein RHE_CH02229 (155 aa).

It belongs to the UPF0178 family.

The protein is UPF0178 protein RHE_CH02229 of Rhizobium etli (strain ATCC 51251 / DSM 11541 / JCM 21823 / NBRC 15573 / CFN 42).